We begin with the raw amino-acid sequence, 199 residues long: Small ribosomal subunit protein mS38 (199 aa).

Belongs to the mitochondrion-specific ribosomal protein mS38 family. Component of the mitochondrial small ribosomal subunit (mt-SSU). Mature mammalian 55S mitochondrial ribosomes consist of a small (28S) and a large (39S) subunit. The 28S small subunit contains a 12S ribosomal RNA (12S mt-rRNA) and 30 different proteins. The 39S large subunit contains a 16S rRNA (16S mt-rRNA), a copy of mitochondrial valine transfer RNA (mt-tRNA(Val)), which plays an integral structural role, and 52 different proteins. Interacts with Aurora-A. In terms of tissue distribution, ubiquitously expressed and especially highly expressed in heart, skeletal muscle and testis.

The protein localises to the mitochondrion matrix. Its subcellular location is the nucleus. Functionally, may act as a negative regulator of Aurora-A kinase, by down-regulation through proteasome-dependent degradation. In Homo sapiens (Human), this protein is Small ribosomal subunit protein mS38 (AURKAIP1).